A 55-amino-acid chain; its full sequence is Methylmalonyl-CoA decarboxylase subunit epsilon (55 aa).

The methylmalonyl-CoA decarboxylase is composed of five subunits: the carboxyltransferase alpha subunit (MmdA), the tunnel beta subunit (MmdB), the biotin-containing gamma subunit (MmdC), and the delta (MmdD) and epsilon (MmdE) subunits.

The protein resides in the cell membrane. It carries out the reaction (S)-methylmalonyl-CoA + Na(+)(in) + H(+)(out) = propanoyl-CoA + Na(+)(out) + CO2. With respect to regulation, completely inhibited by avidin. Its function is as follows. Subunit of the sodium ion pump methylmalonyl-CoA decarboxylase, which converts the chemical energy of a decarboxylation reaction into an electrochemical gradient of Na(+) ions across the cytoplasmic membrane, thereby creating a sodium ion motive force that is used for ATP synthesis. The epsilon subunit seems not important for the catalysis of either decarboxylation or Na(+) transport, but it improves binding of the alpha subunit and plays an important role in stabilizing the methylmalonyl-CoA-decarboxylase enzyme complex. Can also convert malonyl-CoA into acetyl-CoA. The polypeptide is Methylmalonyl-CoA decarboxylase subunit epsilon (Veillonella parvula (Staphylococcus parvulus)).